Here is a 159-residue protein sequence, read N- to C-terminus: Heat shock protein beta-9 (159 aa).

The 112-residue stretch at 36–147 (LLRDSPAAQE…EAQTGPSPRL (112 aa)) folds into the sHSP domain.

Belongs to the small heat shock protein (HSP20) family. In terms of tissue distribution, testis specific.

It localises to the cytoplasm. The protein localises to the nucleus. The polypeptide is Heat shock protein beta-9 (HSPB9) (Homo sapiens (Human)).